A 185-amino-acid chain; its full sequence is Elongation factor P (185 aa).

Belongs to the elongation factor P family.

It is found in the cytoplasm. The protein operates within protein biosynthesis; polypeptide chain elongation. In terms of biological role, involved in peptide bond synthesis. Stimulates efficient translation and peptide-bond synthesis on native or reconstituted 70S ribosomes in vitro. Probably functions indirectly by altering the affinity of the ribosome for aminoacyl-tRNA, thus increasing their reactivity as acceptors for peptidyl transferase. The chain is Elongation factor P from Fervidobacterium nodosum (strain ATCC 35602 / DSM 5306 / Rt17-B1).